Consider the following 282-residue polypeptide: S-formylglutathione hydrolase (282 aa).

Residue Ala-2 is modified to N-acetylalanine. Lys-4 bears the N6-succinyllysine mark. Ser-149 functions as the Charge relay system in the catalytic mechanism. Lys-200 is modified (N6-acetyllysine). Catalysis depends on charge relay system residues Asp-226 and His-260.

It belongs to the esterase D family. Homodimer.

The protein localises to the cytoplasm. The protein resides in the cytoplasmic vesicle. It catalyses the reaction S-formylglutathione + H2O = formate + glutathione + H(+). Serine hydrolase involved in the detoxification of formaldehyde. In Mus musculus (Mouse), this protein is S-formylglutathione hydrolase (Esd).